The sequence spans 674 residues: Enzymatic polyprotein (674 aa).

The protease stretch occupies residues 40 to 130; that stretch reads IELHCFVDTG…CQLYEPFIQF (91 aa). The active site involves Asp-47. The region spanning 267 to 447 is the Reverse transcriptase domain; it reads LKVIKPSKSP…KKINFLGLEI (181 aa).

Belongs to the caulimoviridae enzymatic polyprotein family.

The enzyme catalyses DNA(n) + a 2'-deoxyribonucleoside 5'-triphosphate = DNA(n+1) + diphosphate. In terms of biological role, encodes for at least two polypeptides: protease (PR) and reverse transcriptase (RT). The protease processes the polyprotein in cis. Reverse transcriptase is multifunctional enzyme that converts the viral RNA genome into dsDNA in viral cytoplasmic capsids. This enzyme displays a DNA polymerase activity that can copy either DNA or RNA templates, and a ribonuclease H (RNase H) activity that cleaves the RNA strand of RNA-DNA heteroduplexes in a partially processive 3'- to 5'-endonucleasic mode. Neo-synthesized pregenomic RNA (pgRNA) are encapsidated, and reverse-transcribed inside the nucleocapsid. Partial (+)DNA is synthesized from the (-)DNA template and generates the relaxed circular DNA (RC-DNA) genome. After budding and infection, the RC-DNA migrates in the nucleus, and is converted into a plasmid-like covalently closed circular DNA (cccDNA). This chain is Enzymatic polyprotein, found in Arabidopsis thaliana (Mouse-ear cress).